The primary structure comprises 326 residues: DnaJ homolog subfamily B member 6 (326 aa).

In terms of domain architecture, J spans 2–69 (VDYYEVLGVQ…KKRDIYDKYG (68 aa)). An interaction with HSP70 region spans residues 2–146 (VDYYEVLGVQ…TGSFFSAFSG (145 aa)). The segment at 119–242 (FEDFFGNRRG…ADDDALAEER (124 aa)) is interaction with KRT18. Residue R135 is modified to Omega-N-methylarginine. Positions 249 to 326 (ALPAQPAGLR…KKKKSTKGNH (78 aa)) are disordered. S277 carries the post-translational modification Phosphoserine.

Homooligomer. Interacts with BAG3, HSPB8 and STUB1. Interacts with ALKBH1. Interacts with HSP70, KRT18 and PTTG. In terms of assembly, interacts with histone deacetylases HDAC4, HDAC6, and SIRT2, HDAC activity is required for antiaggregation. Widely expressed. Highest levels in testis and brain, and lower levels in heart, spleen, intestine, ovary, placenta, lung, kidney, pancreas, thymus, prostate, skeletal muscle, liver and leukocytes. In testis, expressed in germ cells in the earlier stages of differentiation pathway as well as in spermatids. In brain, expressed at a higher level in hippocampus and thalamus and a lower level in amygdala, substantia nigra, corpus callosum and caudate nucleus.

It is found in the cytoplasm. The protein localises to the perinuclear region. Its subcellular location is the nucleus. The protein resides in the myofibril. It localises to the sarcomere. It is found in the z line. Has a stimulatory effect on the ATPase activity of HSP70 in a dose-dependent and time-dependent manner and hence acts as a co-chaperone of HSP70. Plays an indispensable role in the organization of KRT8/KRT18 filaments. Acts as an endogenous molecular chaperone for neuronal proteins including huntingtin. Suppresses aggregation and toxicity of polyglutamine-containing, aggregation-prone proteins. Also reduces cellular toxicity and caspase-3 activity. Its function is as follows. Isoform B but not isoform A inhibits huntingtin aggregation. This Homo sapiens (Human) protein is DnaJ homolog subfamily B member 6 (DNAJB6).